The chain runs to 363 residues: Trichocyst matrix protein T4-B (363 aa).

A signal peptide spans 1–17 (MARSLTILAIVFAVATA). Positions 18-52 (RVTKSESPKEILAQVNKDSFGNSILSVLQLQLATG) are excised as a propeptide. Residues 85 to 119 (VAFEKIIADLEQEIAYHQTQIVALSNLRDSTTEAL) adopt a coiled-coil conformation. Residues 190–221 (RFEKVQAKLMESKHALFKPLINALTQLASKVD) constitute a propeptide that is removed on maturation. Residues 244–352 (ASLLATEERQ…EVLTQKLSAA (109 aa)) adopt a coiled-coil conformation.

Belongs to the TMP family. In terms of processing, two components are produced by post-translational processing from the precursor peptide.

The protein resides in the trichocyst. Functionally, structural protein that crystallize inside the trichocyst matrix. This is Trichocyst matrix protein T4-B (T4B) from Paramecium tetraurelia.